The chain runs to 174 residues: NADH-ubiquinone oxidoreductase chain 6 (174 aa).

6 consecutive transmembrane segments (helical) span residues M1 to S21, S24 to L44, G47 to F67, V86 to V106, G111 to G131, and W151 to A171.

It belongs to the complex I subunit 6 family. As to quaternary structure, core subunit of respiratory chain NADH dehydrogenase (Complex I) which is composed of 45 different subunits.

The protein resides in the mitochondrion inner membrane. The enzyme catalyses a ubiquinone + NADH + 5 H(+)(in) = a ubiquinol + NAD(+) + 4 H(+)(out). Functionally, core subunit of the mitochondrial membrane respiratory chain NADH dehydrogenase (Complex I) which catalyzes electron transfer from NADH through the respiratory chain, using ubiquinone as an electron acceptor. Essential for the catalytic activity and assembly of complex I. The chain is NADH-ubiquinone oxidoreductase chain 6 (MT-ND6) from Pongo abelii (Sumatran orangutan).